The primary structure comprises 156 residues: Small ribosomal subunit protein uS7 (156 aa).

In terms of assembly, part of the 30S ribosomal subunit. Contacts proteins S9 and S11. Binds to the C-terminus of IF3 and to the C-terminus of Era.

Functionally, one of the primary rRNA binding proteins, it binds directly to 3'-end of the 16S rRNA where it nucleates assembly of the head domain of the 30S subunit. Is located at the subunit interface close to the decoding center. Binds mRNA and the E site tRNA blocking its exit path in the ribosome. This blockage implies that this section of the ribosome must be able to move to release the deacetylated tRNA. This Thermus thermophilus (strain ATCC 27634 / DSM 579 / HB8) protein is Small ribosomal subunit protein uS7 (rpsG).